The sequence spans 185 residues: Large ribosomal subunit protein uL22 (185 aa).

Positions 157–185 are disordered; that stretch reads VAAPTPDEDAPKKKQSKKKMARQKLMQRD. The segment covering 169–178 has biased composition (basic residues); the sequence is KKQSKKKMAR.

Belongs to the universal ribosomal protein uL22 family.

In Argas monolakensis (Mono lake bird tick), this protein is Large ribosomal subunit protein uL22 (RpL17).